The sequence spans 1632 residues: uncharacterized protein (1632 aa).

Over residues 1–15 (MSNNKQTAAPAATSN) the composition is skewed to polar residues. The disordered stretch occupies residues 1 to 23 (MSNNKQTAAPAATSNEKAENGAE). Topologically, residues 1–63 (MSNNKQTAAP…TKDAFKGKYR (63 aa)) are cytoplasmic. A helical membrane pass occupies residues 64–86 (VFYGNGLHTSIMFGAGTAALDLM). Over 87–1632 (TPGSFLPPFP…ESDGEEMSGE (1546 aa)) the chain is Extracellular. N149 and N274 each carry an N-linked (GlcNAc...) asparagine; by host glycan. The segment at 516-538 (ELSSQLGDTDTKKEQKEKRSKQG) is disordered. N654, N719, and N797 each carry an N-linked (GlcNAc...) asparagine; by host glycan. The tract at residues 838–890 (IKGTKKSDDGDSKTDGSGDMEDDFTSLAKMTNRKRKAGGKDGPSKKKKKDGAD) is disordered. Composition is skewed to basic and acidic residues over residues 842–853 (KKSDDGDSKTDG) and 875–890 (GGKD…DGAD). N1012, N1031, N1261, N1339, N1511, and N1546 each carry an N-linked (GlcNAc...) asparagine; by host glycan. Positions 1603 to 1632 (PSAMDVDEDEDEDMDDESDDESDGEEMSGE) are disordered. Acidic residues predominate over residues 1607–1632 (DVDEDEDEDMDDESDDESDGEEMSGE).

The protein resides in the host membrane. This is an uncharacterized protein from Ostreid herpesvirus 1 (isolate France) (OsHV-1).